Reading from the N-terminus, the 200-residue chain is Prostamide/prostaglandin F synthase (200 aa).

It belongs to the peroxiredoxin-like PRXL2 family. Prostamide/prostaglandin F synthase subfamily.

The protein resides in the cytoplasm. The protein localises to the cytosol. The enzyme catalyses prostaglandin H2 + [thioredoxin]-dithiol = prostaglandin F2alpha + [thioredoxin]-disulfide. It carries out the reaction prostamide F2alpha + [thioredoxin]-disulfide = prostamide H2 + [thioredoxin]-dithiol. Functionally, catalyzes the reduction of prostaglandin-ethanolamide H(2) (prostamide H(2)) to prostamide F(2alpha) with NADPH as proton donor. Also able to reduce prostaglandin H(2) to prostaglandin F(2alpha). This Salmo salar (Atlantic salmon) protein is Prostamide/prostaglandin F synthase (prxl2b).